A 128-amino-acid chain; its full sequence is Probable 4-amino-4-deoxy-L-arabinose-phosphoundecaprenol flippase subunit ArnF (128 aa).

Topologically, residues 1–2 are cytoplasmic; that stretch reads MG. A helical membrane pass occupies residues 3-23; the sequence is LMWGLFSVIIASVAQLSLGFA. The Periplasmic portion of the chain corresponds to 24-35; that stretch reads ASHLPPMTHLWD. A helical membrane pass occupies residues 36 to 56; it reads FIAALLAFGLDARILLLGLLG. Over 57–76 the chain is Cytoplasmic; that stretch reads YLLSVFCWYKTLHKLALSKA. The helical transmembrane segment at 77-97 threads the bilayer; the sequence is YALLSMSYVLVWIASMVLPGW. Over 98-100 the chain is Periplasmic; that stretch reads EGT. A helical transmembrane segment spans residues 101–121; that stretch reads FSLKALLGVACIMSGLMLIFL. Residues 122-128 lie on the Cytoplasmic side of the membrane; sequence PTTKQRY.

The protein belongs to the ArnF family. As to quaternary structure, heterodimer of ArnE and ArnF.

It localises to the cell inner membrane. It participates in bacterial outer membrane biogenesis; lipopolysaccharide biosynthesis. Its function is as follows. Translocates 4-amino-4-deoxy-L-arabinose-phosphoundecaprenol (alpha-L-Ara4N-phosphoundecaprenol) from the cytoplasmic to the periplasmic side of the inner membrane. This is Probable 4-amino-4-deoxy-L-arabinose-phosphoundecaprenol flippase subunit ArnF from Shigella sonnei (strain Ss046).